Reading from the N-terminus, the 554-residue chain is Germacrene A synthase (554 aa).

Positions 306, 310, 453, and 457 each coordinate Mg(2+). The DDXXD motif motif lies at 306-310; it reads DDTYD.

It belongs to the terpene synthase family. Requires Mg(2+) as cofactor.

The protein resides in the cytoplasm. It is found in the cytosol. It carries out the reaction (2E,6E)-farnesyl diphosphate = (+)-(R)-germacrene A + diphosphate. Its pathway is secondary metabolite biosynthesis; terpenoid biosynthesis. Sesquiterpene synthase involved in germacrene A biosynthesis. Also produces additional sesquiterpene products, including 4,5-di-epi-aristolochene, eremophilene, alpha-selinene. The polypeptide is Germacrene A synthase (Pogostemon cablin (Patchouli)).